Reading from the N-terminus, the 330-residue chain is Tryptophan--tRNA ligase (330 aa).

Residues 10–12 (QTT) and 18–19 (GN) contribute to the ATP site. The short motif at 11-19 (TTGALHLGN) is the 'HIGH' region element. D134 contacts L-tryptophan. ATP-binding positions include 146-148 (GED), I186, and 195-199 (KMSKS). Positions 195–199 (KMSKS) match the 'KMSKS' region motif.

This sequence belongs to the class-I aminoacyl-tRNA synthetase family. As to quaternary structure, homodimer.

It is found in the cytoplasm. It carries out the reaction tRNA(Trp) + L-tryptophan + ATP = L-tryptophyl-tRNA(Trp) + AMP + diphosphate + H(+). In terms of biological role, catalyzes the attachment of tryptophan to tRNA(Trp). The polypeptide is Tryptophan--tRNA ligase (Rickettsia prowazekii (strain Madrid E)).